Reading from the N-terminus, the 327-residue chain is tRNA-dihydrouridine(20/20a) synthase (327 aa).

FMN-binding positions include 17 to 19 (PML) and Gln69. The active-site Proton donor is Cys99. Residues Lys138, His170, 210-212 (NGG), and 232-233 (GR) contribute to the FMN site.

This sequence belongs to the Dus family. DusA subfamily. It depends on FMN as a cofactor.

It catalyses the reaction 5,6-dihydrouridine(20) in tRNA + NADP(+) = uridine(20) in tRNA + NADPH + H(+). The enzyme catalyses 5,6-dihydrouridine(20) in tRNA + NAD(+) = uridine(20) in tRNA + NADH + H(+). The catalysed reaction is 5,6-dihydrouridine(20a) in tRNA + NADP(+) = uridine(20a) in tRNA + NADPH + H(+). It carries out the reaction 5,6-dihydrouridine(20a) in tRNA + NAD(+) = uridine(20a) in tRNA + NADH + H(+). Catalyzes the synthesis of 5,6-dihydrouridine (D), a modified base found in the D-loop of most tRNAs, via the reduction of the C5-C6 double bond in target uridines. Specifically modifies U20 and U20a in tRNAs. This Pasteurella multocida (strain Pm70) protein is tRNA-dihydrouridine(20/20a) synthase.